The sequence spans 823 residues: Leucine--tRNA ligase (823 aa).

The short motif at 42–52 (PYPSGTLHMGH) is the 'HIGH' region element. The 'KMSKS' region signature appears at 575–579 (KMSKS). Residue K578 participates in ATP binding.

It belongs to the class-I aminoacyl-tRNA synthetase family.

The protein resides in the cytoplasm. The enzyme catalyses tRNA(Leu) + L-leucine + ATP = L-leucyl-tRNA(Leu) + AMP + diphosphate. This is Leucine--tRNA ligase from Legionella pneumophila subsp. pneumophila (strain Philadelphia 1 / ATCC 33152 / DSM 7513).